The following is a 120-amino-acid chain: C-C motif chemokine 16 (120 aa).

An N-terminal signal peptide occupies residues 1-23 (MKVSEAALSLLVLILIITSASRS). 2 disulfide bridges follow: cysteine 37–cysteine 60 and cysteine 38–cysteine 76.

The protein belongs to the intercrine beta (chemokine CC) family. Mainly expressed in liver, also found in spleen and thymus. Highly expressed in LPS- and IFN-gamma-activated monocytes, weakly in some lymphocytes, including natural killer cells, gamma-delta T-cells, and some T-cell clones.

It is found in the secreted. Shows chemotactic activity for lymphocytes and monocytes but not neutrophils. Also shows potent myelosuppressive activity, suppresses proliferation of myeloid progenitor cells. Recombinant SCYA16 shows chemotactic activity for monocytes and THP-1 monocytes, but not for resting lymphocytes and neutrophils. Induces a calcium flux in THP-1 cells that were desensitized by prior expression to RANTES. The polypeptide is C-C motif chemokine 16 (CCL16) (Homo sapiens (Human)).